The sequence spans 615 residues: Protein translocase subunit SecD (615 aa).

Helical transmembrane passes span Tyr10–Gly30, Gln452–Tyr472, Leu477–Leu497, Met504–Ile524, Gly548–Val570, and Gly585–Tyr605.

The protein belongs to the SecD/SecF family. SecD subfamily. Forms a complex with SecF. Part of the essential Sec protein translocation apparatus which comprises SecA, SecYEG and auxiliary proteins SecDF-YajC and YidC.

It is found in the cell inner membrane. In terms of biological role, part of the Sec protein translocase complex. Interacts with the SecYEG preprotein conducting channel. SecDF uses the proton motive force (PMF) to complete protein translocation after the ATP-dependent function of SecA. In Shigella flexneri, this protein is Protein translocase subunit SecD.